Here is a 186-residue protein sequence, read N- to C-terminus: Small ribosomal subunit protein uS5 (186 aa).

The 64-residue stretch at 20–83 (FVDKLVHINR…EAAKRDMIFV (64 aa)) folds into the S5 DRBM domain.

This sequence belongs to the universal ribosomal protein uS5 family. As to quaternary structure, part of the 30S ribosomal subunit. Contacts proteins S4 and S8.

Its function is as follows. With S4 and S12 plays an important role in translational accuracy. Functionally, located at the back of the 30S subunit body where it stabilizes the conformation of the head with respect to the body. This is Small ribosomal subunit protein uS5 from Brucella anthropi (strain ATCC 49188 / DSM 6882 / CCUG 24695 / JCM 21032 / LMG 3331 / NBRC 15819 / NCTC 12168 / Alc 37) (Ochrobactrum anthropi).